Consider the following 657-residue polypeptide: MFLTSILYTIIIILIFYKGLEYLIEKRSFPLVHPIKGVMNGTKPYFIFGDLPFQRLLNLKPKLKELGSIYFRWFFWYPIVEIKDINAIQYVYNEKSNNYSLYWNLNKSSNFILTGSEIKRFFRIYYCAFNCKDSLQRIMPVIKSQVFDFIHSHKFQNSTLSTNDDVTNFMLKLLSRVYLGSSDEAYHCFKANYKKFNKSYLDFFHYLFPTLLKIPSKFSRKYIKNKNKRALYQVLAMKAYYGVVKQSSDDHIEESMINIIAETSYNDKEGLSLEEIKMPSYLLNASSIKGPMIMVENLMFQLIEKSEIESKIRKEIKLVFEKNGKDVNSFDFDDIMEMKYLEATLDEINRLYPPFPKLMPRQTKESDRILGYHIPKGTMISCPVADILRDPSNFQDPLTFKPERQLIFSNPKFASPSITSIQEINGLSSSSSNSFALHHRSLPSINNNNNNNNNNNNNNNNNNNNNNNNNSNNNSINGNNKNNNRNCIQSFNNSALKKSFLSDSSSIIDNIVGTNRVDKLKLDSLNENSNINNNNNKDLLNVPNIIEINKNNPISNNKYNSYNNLTIEERNQRIIKNLPWGIGSKKCLGKELAKLIVKTIIVILYSQYTFDKHLDENDEELCDTNNQPKIQITFNPEIKPPLLLKSRKLFSISQPKQ.

The helical transmembrane segment at 2–24 (FLTSILYTIIIILIFYKGLEYLI) threads the bilayer. Residues 440–486 (RSLPSINNNNNNNNNNNNNNNNNNNNNNNNNSNNNSINGNNKNNNRN) form a disordered region. The segment covering 446–486 (NNNNNNNNNNNNNNNNNNNNNNNNNSNNNSINGNNKNNNRN) has biased composition (low complexity). Heme is bound at residue Cys587.

This sequence belongs to the cytochrome P450 family. Requires heme as cofactor.

The protein resides in the membrane. This is Probable cytochrome P450 556A1 (cyp556A1) from Dictyostelium discoideum (Social amoeba).